Reading from the N-terminus, the 186-residue chain is Der GTPase-activating protein YihI (186 aa).

The disordered stretch occupies residues 39–77 (LDAKAREDKKKRKHKGLASGSRHSAVEEKANKLQNEIKD). A compositionally biased stretch (basic and acidic residues) spans 62 to 77 (SAVEEKANKLQNEIKD).

The protein belongs to the YihI family. Interacts with Der.

Its function is as follows. A GTPase-activating protein (GAP) that modifies Der/EngA GTPase function. May play a role in ribosome biogenesis. In Haemophilus influenzae (strain 86-028NP), this protein is Der GTPase-activating protein YihI.